Reading from the N-terminus, the 215-residue chain is Ribose-5-phosphate isomerase A (215 aa).

Substrate is bound by residues 26–29 (TGST), 79–82 (DGAD), and 92–95 (KGGG). Glutamate 101 functions as the Proton acceptor in the catalytic mechanism. Lysine 119 provides a ligand contact to substrate.

The protein belongs to the ribose 5-phosphate isomerase family. Homodimer.

The enzyme catalyses aldehydo-D-ribose 5-phosphate = D-ribulose 5-phosphate. Its pathway is carbohydrate degradation; pentose phosphate pathway; D-ribose 5-phosphate from D-ribulose 5-phosphate (non-oxidative stage): step 1/1. Functionally, catalyzes the reversible conversion of ribose-5-phosphate to ribulose 5-phosphate. The polypeptide is Ribose-5-phosphate isomerase A (Stenotrophomonas maltophilia (strain K279a)).